Consider the following 689-residue polypeptide: Beta-adrenergic receptor kinase 1 (689 aa).

Positions 1 to 190 are N-terminal; it reads MADLEAVLAD…ELNIHLTMND (190 aa). Residues 54 to 175 enclose the RGS domain; sequence TFEKIFSQKL…IESDKFTRFC (122 aa). The region spanning 191-453 is the Protein kinase domain; the sequence is FSVHRIIGRG…AQEVKESPFF (263 aa). ATP is bound by residues 197–205 and lysine 220; that span reads IGRGGFGEV. Residue aspartate 317 is the Proton acceptor of the active site. Residues 454 to 521 enclose the AGC-kinase C-terminal domain; sequence RSLDWQMVFL…TISERWQQEV (68 aa). Residues 558-652 enclose the PH domain; sequence DCIVHGYMSK…WKKELRDAYR (95 aa). Serine 670 is subject to Phosphoserine.

This sequence belongs to the protein kinase superfamily. AGC Ser/Thr protein kinase family. GPRK subfamily. As to quaternary structure, interacts with the heterodimer formed by GNB1 and GNG2. Interacts with GIT1. Interacts with, and phosphorylates chemokine-stimulated CCR5. Interacts with ARRB1. Interacts with LPAR1 and LPAR2. Interacts with RALA in response to LPAR1 activation. ADRBK1 and RALA mutually inhibit each other's binding to LPAR1. Interacts with ADRB2.

Its subcellular location is the cytoplasm. The protein localises to the cell membrane. The protein resides in the postsynapse. It localises to the presynapse. The enzyme catalyses [beta-adrenergic receptor] + ATP = [beta-adrenergic receptor]-phosphate + ADP + H(+). With respect to regulation, in contrast to other AGC family kinases, the catalytic activity is solely regulated by the binding of substrates and ligands, not by phosphorylation of the kinase domain. Functionally, specifically phosphorylates the agonist-occupied form of the beta-adrenergic and closely related receptors, probably inducing a desensitization of them. Key regulator of LPAR1 signaling. Competes with RALA for binding to LPAR1 thus affecting the signaling properties of the receptor. Desensitizes LPAR1 and LPAR2 in a phosphorylation-independent manner. Positively regulates ciliary smoothened (SMO)-dependent Hedgehog (Hh) signaling pathway by facilitating the trafficking of SMO into the cilium and the stimulation of SMO activity. Inhibits relaxation of airway smooth muscle in response to blue light. In Mus musculus (Mouse), this protein is Beta-adrenergic receptor kinase 1.